The primary structure comprises 228 residues: U1 small nuclear ribonucleoprotein C-2 (228 aa).

A Matrin-type zinc finger spans residues 4–36; the sequence is YYCDYCDTYLTHDSPSVRKQHNAGYKHKANVRT. The segment at 105 to 228 is disordered; that stretch reads PGVRPPILPA…SYALPSEGNH (124 aa). Pro residues-rich tracts occupy residues 107-156 and 164-175; these read VRPP…PPGS and LPRPPTLPPPTS. Residues 178–190 are compositionally biased toward low complexity; the sequence is PGAPIPNSAAPPA. Positions 196–214 are enriched in pro residues; sequence PPAPAGPTSGAPPAPPTAP.

Belongs to the U1 small nuclear ribonucleoprotein C family. In terms of assembly, U1 snRNP is composed of the 7 core Sm proteins B/B', D1, D2, D3, E, F and G that assemble in a heptameric protein ring on the Sm site of the small nuclear RNA to form the core snRNP, and at least 3 U1 snRNP-specific proteins U1-70K, U1-A and U1-C. U1-C interacts with U1 snRNA and the 5' splice-site region of the pre-mRNA.

The protein resides in the nucleus. In terms of biological role, component of the spliceosomal U1 snRNP, which is essential for recognition of the pre-mRNA 5' splice-site and the subsequent assembly of the spliceosome. U1-C is directly involved in initial 5' splice-site recognition for both constitutive and regulated alternative splicing. The interaction with the 5' splice-site seems to precede base-pairing between the pre-mRNA and the U1 snRNA. Stimulates commitment or early (E) complex formation by stabilizing the base pairing of the 5' end of the U1 snRNA and the 5' splice-site region. The polypeptide is U1 small nuclear ribonucleoprotein C-2 (Sorghum bicolor (Sorghum)).